The chain runs to 138 residues: Small ribosomal subunit protein uS11c (138 aa).

A disordered region spans residues 1–24 (MAKPIPKVGSRRNGRSSARKSARR). Over residues 9 to 24 (GSRRNGRSSARKSARR) the composition is skewed to basic residues.

The protein belongs to the universal ribosomal protein uS11 family. Part of the 30S ribosomal subunit.

It localises to the plastid. It is found in the chloroplast. The chain is Small ribosomal subunit protein uS11c from Gossypium hirsutum (Upland cotton).